Here is a 545-residue protein sequence, read N- to C-terminus: ATP synthase subunit alpha (545 aa).

ATP is bound at residue 173 to 180; it reads GDRKTGKT.

This sequence belongs to the ATPase alpha/beta chains family. As to quaternary structure, F-type ATPases have 2 components, CF(1) - the catalytic core - and CF(0) - the membrane proton channel. CF(1) has five subunits: alpha(3), beta(3), gamma(1), delta(1), epsilon(1). CF(0) has three main subunits: a(1), b(2) and c(9-12). The alpha and beta chains form an alternating ring which encloses part of the gamma chain. CF(1) is attached to CF(0) by a central stalk formed by the gamma and epsilon chains, while a peripheral stalk is formed by the delta and b chains.

Its subcellular location is the cell membrane. It carries out the reaction ATP + H2O + 4 H(+)(in) = ADP + phosphate + 5 H(+)(out). Its function is as follows. Produces ATP from ADP in the presence of a proton gradient across the membrane. The alpha chain is a regulatory subunit. This chain is ATP synthase subunit alpha, found in Renibacterium salmoninarum (strain ATCC 33209 / DSM 20767 / JCM 11484 / NBRC 15589 / NCIMB 2235).